A 371-amino-acid chain; its full sequence is 4-hydroxy-3-methylbut-2-en-1-yl diphosphate synthase (flavodoxin) (371 aa).

The [4Fe-4S] cluster site is built by cysteine 270, cysteine 273, cysteine 305, and glutamate 312.

It belongs to the IspG family. [4Fe-4S] cluster serves as cofactor.

It catalyses the reaction (2E)-4-hydroxy-3-methylbut-2-enyl diphosphate + oxidized [flavodoxin] + H2O + 2 H(+) = 2-C-methyl-D-erythritol 2,4-cyclic diphosphate + reduced [flavodoxin]. The protein operates within isoprenoid biosynthesis; isopentenyl diphosphate biosynthesis via DXP pathway; isopentenyl diphosphate from 1-deoxy-D-xylulose 5-phosphate: step 5/6. Converts 2C-methyl-D-erythritol 2,4-cyclodiphosphate (ME-2,4cPP) into 1-hydroxy-2-methyl-2-(E)-butenyl 4-diphosphate. This is 4-hydroxy-3-methylbut-2-en-1-yl diphosphate synthase (flavodoxin) from Chromohalobacter salexigens (strain ATCC BAA-138 / DSM 3043 / CIP 106854 / NCIMB 13768 / 1H11).